The primary structure comprises 170 residues: MMAGMKIQLVCMILLAFSSWSLCSDSEEEMKALEADLLTNMHTSKISKASVSSWKMTLLNVCSFVNNLNSQAEETGEFREEELITRRKFPTALDGFSLEAMLTIYQLQKICHSRAFQQWELIQEDVLDAGNDKNEKEEVIKRKIPYILKRQLYENKPRRPYILKRGSYYY.

The first 23 residues, 1–23, serve as a signal peptide directing secretion; it reads MMAGMKIQLVCMILLAFSSWSLC.

Belongs to the neurotensin family. As to quaternary structure, interacts with NTSR1. Interacts with SORT1. Interacts with SORL1. Post-translationally, neurotensin is cleaved and degraded by Angiotensin-converting enzyme (ACE) and neprilysin (MME).

Its subcellular location is the secreted. It is found in the cytoplasmic vesicle. The protein resides in the secretory vesicle. Its function is as follows. Neurotensin may play an endocrine or paracrine role in the regulation of fat metabolism. It causes contraction of smooth muscle. This chain is Neurotensin/neuromedin N (NTS), found in Canis lupus familiaris (Dog).